The chain runs to 914 residues: Translation initiation factor IF-2 (914 aa).

2 disordered regions span residues Glu-246–Gly-271 and Ser-293–Met-313. Over residues Glu-249–Val-266 the composition is skewed to basic and acidic residues. A tr-type G domain is found at Thr-411–Lys-581. A G1 region spans residues Gly-420–Thr-427. Gly-420 to Thr-427 serves as a coordination point for GTP. Residues Gly-445–His-449 form a G2 region. The G3 stretch occupies residues Asp-467–Gly-470. GTP-binding positions include Asp-467–His-471 and Asn-521–Asp-524. Residues Asn-521–Asp-524 form a G4 region. The segment at Ser-557 to Lys-559 is G5.

This sequence belongs to the TRAFAC class translation factor GTPase superfamily. Classic translation factor GTPase family. IF-2 subfamily.

It is found in the cytoplasm. One of the essential components for the initiation of protein synthesis. Protects formylmethionyl-tRNA from spontaneous hydrolysis and promotes its binding to the 30S ribosomal subunits. Also involved in the hydrolysis of GTP during the formation of the 70S ribosomal complex. The polypeptide is Translation initiation factor IF-2 (Chlorobaculum tepidum (strain ATCC 49652 / DSM 12025 / NBRC 103806 / TLS) (Chlorobium tepidum)).